Here is a 305-residue protein sequence, read N- to C-terminus: Homeobox protein NANOGP8 (305 aa).

The tract at residues 1–96 (MSVDPACPQS…KEDKVPVKKQ (96 aa)) is disordered. The span at 65 to 82 (SPDSSTSPKGKQPTSAEN) shows a compositional bias: polar residues. The homeobox DNA-binding region spans 95-154 (KQKTRTVFSSTQLCVLNDRFQRQKYLSLQQMQELSNILNLSYKQVKTWFQNQRMKSKRWQ). A run of 8 repeats spans residues 196 to 200 (WSNQT), 201 to 205 (WNNST), 206 to 210 (WSNQT), 216 to 220 (WSNHS), 221 to 225 (WNTQT), 226 to 230 (WCTQS), 231 to 235 (WNNQA), and 236 to 240 (WNSPF). The 8 X repeats starting with a Trp in each unit stretch occupies residues 196-240 (WSNQTWNNSTWSNQTQNIQSWSNHSWNTQTWCTQSWNNQAWNSPF). Residues 196–240 (WSNQTWNNSTWSNQTQNIQSWSNHSWNTQTWCTQSWNNQAWNSPF) are sufficient for transactivation activity. The tract at residues 241 to 305 (YNCGEESLQS…YSMNMQPEDV (65 aa)) is sufficient for strong transactivation activity.

This sequence belongs to the Nanog homeobox family.

It is found in the nucleus. In terms of biological role, may act as a transcription regulator. When overexpressed, promotes entry of cells into S phase and cell proliferation. This chain is Homeobox protein NANOGP8 (NANOGP8), found in Homo sapiens (Human).